The primary structure comprises 128 residues: Glycine cleavage system H protein (128 aa).

Positions 24 to 106 constitute a Lipoyl-binding domain; sequence SVTVGITAHA…YGDGWFFKIK (83 aa). Residue Lys65 is modified to N6-lipoyllysine.

It belongs to the GcvH family. As to quaternary structure, the glycine cleavage system is composed of four proteins: P, T, L and H. (R)-lipoate serves as cofactor.

Functionally, the glycine cleavage system catalyzes the degradation of glycine. The H protein shuttles the methylamine group of glycine from the P protein to the T protein. This is Glycine cleavage system H protein from Chromobacterium violaceum (strain ATCC 12472 / DSM 30191 / JCM 1249 / CCUG 213 / NBRC 12614 / NCIMB 9131 / NCTC 9757 / MK).